A 543-amino-acid polypeptide reads, in one-letter code: Vibriobactin-specific 2,3-dihydroxybenzoate-AMP ligase (543 aa).

Residues 240 to 259 (FPLSSPGALGVFWAGGCVVL) traverse the membrane as a helical segment.

It belongs to the ATP-dependent AMP-binding enzyme family.

The protein resides in the cell inner membrane. It carries out the reaction 2,3-dihydroxybenzoate + holo-[ACP] + ATP = 2,3-dihydroxybenzoyl-[ACP] + AMP + diphosphate. The protein operates within siderophore biosynthesis; vibriobactin biosynthesis. In terms of biological role, activation of the carboxylate group of 2,3-dihydroxy-benzoate (DHB), via ATP-dependent PPi exchange reactions, to the acyladenylate, preparing that molecule for the final stages of vibriobactin synthesis. In Vibrio cholerae serotype O1 (strain ATCC 39315 / El Tor Inaba N16961), this protein is Vibriobactin-specific 2,3-dihydroxybenzoate-AMP ligase (vibE).